A 928-amino-acid polypeptide reads, in one-letter code: MAGNIVKWWKHKILGGYKQFSVQECTTDSEELMYHQVRASSSCSAPPDLLLVSERDNNIQLRSPVVNIITTPPGNASGAGSKQQSHHQTNHHSSGRSHPGHTAHPQDVSSGGSHSKHLRISSTSNGKHGKYSNMQQQLPQDEDVVDAAATMQQQQHTGHAHSRHLHHHKEERIRLEEFTCDVSVEGGKSSQPLQFSFTFYDLDGHHGKITKDDIVGIVYTIYESIGKSVVVPHCGSKTINVRLTVSPEGKSKSQPVVPVPVAAGFSSSHASKLKKLPTGLAAMSKPLAGGGVGSGGASALTTSAGNRRQHRYRPRKLIKSDDEDDDSNSEKEKDAAHAPAADQPSGSGTKATGKSHHHQSQSARYHQKNNSRAEQCCTEQNTPDNGHNTYENMLNLKCCKPEVDQVDCPSHRQHHQSHPNHQMRQQDIYMKQATQRVKMLRRARKQKYQDHCLETRQRSLSVGNDSACPNRHLQLQQPPVGHPQPQSLNHKSASGSPPLGVGGGGDMMLDGVQLRQPRPHSLTPHQHQQQNQQQQQQQRKSAECWKSALNRNDLISIIRESMEKNRLCFQLNGKPQANVSPIRQPAAQQQPQQQQRQRCNTGSKIPTLITNHSPVAQQSPLSCSPPTAEPTTPSIPAAPPAIEVNGQQHHPTHPTHPSHHNHHEHPQPHIPIYHQQLAINPAVLAAQQTHNTAHNKLNLCGYDSFLHATICGGGAAAHSPPATPSNVATVQPIPKKSQKNLLQGYQRLEQSQQQQQQQRSSKDYKNYGNLIYAKLSEQLQQKDREQRRQRHKQQQHQMLQDQPKDASRSEQRPPTSNSSSAGSKIYGDAVECAHLLASEEEDLPPSPQLTSTPSKVVSTDTLIDLNDDVGEAVAEAVTEGGKQSLEAEESGQQVEVELDTSASSSMIHRYVHEHIHHHYHHFKEQQDV.

Residues 68-80 (IITTPPGNASGAG) show a composition bias toward polar residues. Residues 68 to 133 (IITTPPGNAS…SNGKHGKYSN (66 aa)) are disordered. Residues 84-101 (QSHHQTNHHSSGRSHPGH) show a composition bias toward basic residues. A compositionally biased stretch (polar residues) spans 120-133 (ISSTSNGKHGKYSN). An interaction with dsh region spans residues 177 to 253 (EFTCDVSVEG…TVSPEGKSKS (77 aa)). The EF-hand domain maps to 188–224 (KSSQPLQFSFTFYDLDGHHGKITKDDIVGIVYTIYES). The important for binding to zinc stretch occupies residues 227-372 (KSVVVPHCGS…ARYHQKNNSR (146 aa)). Disordered stretches follow at residues 291–368 (GVGS…YHQK), 462–543 (VGND…KSAE), 578–600 (NVSPIRQPAAQQQPQQQQRQRCN), 614–668 (PVAQ…HPQP), and 779–825 (LQQK…GSKI). The segment covering 307–317 (RRQHRYRPRKL) has biased composition (basic residues). Phosphoserine occurs at positions 320, 327, and 329. The segment covering 353-368 (GKSHHHQSQSARYHQK) has biased composition (basic residues). Residues 484–493 (QPQSLNHKSA) show a composition bias toward polar residues. Over residues 525 to 538 (HQHQQQNQQQQQQQ) the composition is skewed to low complexity. A required for nuclear localization and inhibition of Wnt signaling region spans residues 543-572 (ECWKSALNRNDLISIIRESMEKNRLCFQLN). Low complexity-rich tracts occupy residues 583 to 598 (RQPAAQQQPQQQQRQR) and 624 to 649 (SPPTAEPTTPSIPAAPPAIEVNGQQH). Over residues 650-663 (HPTHPTHPSHHNHH) the composition is skewed to basic residues. Positions 802-811 (QPKDASRSEQ) are enriched in basic and acidic residues. Polar residues predominate over residues 812 to 822 (RPPTSNSSSAG).

It belongs to the NKD family. As to quaternary structure, interacts with dsh. This interaction may be stabilized by zinc.

The protein resides in the cell membrane. Its subcellular location is the cytoplasm. It is found in the nucleus. Cell autonomous antagonist of the canonical Wnt signaling pathway. May activate a second Wnt signaling pathway that controls planar cell polarity. Required for neuroblast specification. This chain is Protein naked cuticle (nkd), found in Drosophila melanogaster (Fruit fly).